A 177-amino-acid polypeptide reads, in one-letter code: Anditomin synthesis protein L (177 aa).

Transmembrane regions (helical) follow at residues 54 to 74 (VVNS…PFIM) and 117 to 137 (IVNF…YMVF). An N-linked (GlcNAc...) asparagine glycan is attached at asparagine 165.

It localises to the membrane. The protein operates within secondary metabolite biosynthesis; terpenoid biosynthesis. In terms of biological role, part of the gene cluster that mediates the biosynthesis of anditomin, a fungal meroterpenoid. The first step of the pathway is the synthesis of 3,5-dimethylorsellinic acid (DMOA) by the polyketide synthase andM. DMOA is then converted to the phthalide compound 5,7-dihydroxy-4,6-dimethylphthalide (DHDMP) by the cytochrome P450 monooxygenase andK, which is further prenylated by the prenyltransferase andD to yield farnesyl-DHDMP. Further epoxidation by the FAD-dependent monooxygenase andE leads to epoxyfarnesyl-DHDMP. The next step involves the terpene cyclase andB that converts epoxyfarnesyl-DHDMP into preandiloid A through opening of the epoxide ring followed by the cyclization of the farnesyl moiety. Preandiloid A is in turn oxidized at the C-3 hydroxyl group to yield preandiloid B by the dehydrogenase andC. The dioxygenase andA is solely responsible for the dehydrogenation of preandiloid B leading to the enone preandiloid C, as well as for the intriguing structural rearrangement to generate the bicyclo[2.2.2]octane core, transforming preandiloid C into andiconin. FAD-binding monooxygenase andJ then produces andilesin D which is reduced by dehydrogenase andI to yield andilesin A. Action of acetyltransferase andG followed by a spontaneous acetate elimination leads then to andilesin B, which is in turn substrate of the short chain dehydrogenase andH to yield andilesin C. Finally, the dioxygenase andF catalyzes the transformation of andilesin C to anditomin. The exact role of andL within the anditomin biosynthetic pathway has not been identified yet. This is Anditomin synthesis protein L from Emericella variicolor (Aspergillus stellatus).